Here is a 381-residue protein sequence, read N- to C-terminus: 8-amino-7-oxononanoate synthase (381 aa).

Arg-27 contributes to the substrate binding site. 105–106 (GY) provides a ligand contact to pyridoxal 5'-phosphate. His-130 is a substrate binding site. Residues Ser-176, 201 to 204 (DEAH), and 232 to 235 (TLSK) contribute to the pyridoxal 5'-phosphate site. Lys-235 is modified (N6-(pyridoxal phosphate)lysine). A substrate-binding site is contributed by Thr-345.

Belongs to the class-II pyridoxal-phosphate-dependent aminotransferase family. BioF subfamily. As to quaternary structure, homodimer. Requires pyridoxal 5'-phosphate as cofactor.

It catalyses the reaction 6-carboxyhexanoyl-[ACP] + L-alanine + H(+) = (8S)-8-amino-7-oxononanoate + holo-[ACP] + CO2. It functions in the pathway cofactor biosynthesis; biotin biosynthesis. Functionally, catalyzes the decarboxylative condensation of pimeloyl-[acyl-carrier protein] and L-alanine to produce 8-amino-7-oxononanoate (AON), [acyl-carrier protein], and carbon dioxide. The polypeptide is 8-amino-7-oxononanoate synthase (Mycolicibacterium paratuberculosis (strain ATCC BAA-968 / K-10) (Mycobacterium paratuberculosis)).